The chain runs to 301 residues: Diaminopimelate epimerase (301 aa).

Residues N15, Q47, and N67 each contribute to the substrate site. Residue C76 is the Proton donor of the active site. Substrate-binding positions include 77–78 (GN), N163, N197, and 215–216 (ER). Residue C224 is the Proton acceptor of the active site. Residue 225-226 (GS) participates in substrate binding.

It belongs to the diaminopimelate epimerase family. Homodimer.

The protein localises to the cytoplasm. The catalysed reaction is (2S,6S)-2,6-diaminopimelate = meso-2,6-diaminopimelate. The protein operates within amino-acid biosynthesis; L-lysine biosynthesis via DAP pathway; DL-2,6-diaminopimelate from LL-2,6-diaminopimelate: step 1/1. Functionally, catalyzes the stereoinversion of LL-2,6-diaminopimelate (L,L-DAP) to meso-diaminopimelate (meso-DAP), a precursor of L-lysine and an essential component of the bacterial peptidoglycan. The polypeptide is Diaminopimelate epimerase (Rhizobium etli (strain ATCC 51251 / DSM 11541 / JCM 21823 / NBRC 15573 / CFN 42)).